An 862-amino-acid chain; its full sequence is Autotaxin (862 aa).

The signal sequence occupies residues Met1–Gly27. The propeptide at Phe28–Arg35 is removed by furin. N-linked (GlcNAc...) asparagine glycosylation is present at Asn53. SMB domains lie at Thr54–Ala97 and Arg98–His142. 10 disulfide bridges follow: Cys58-Cys75, Cys62-Cys93, Cys73-Cys86, Cys79-Cys85, Cys102-Cys119, Cys107-Cys137, Cys117-Cys130, Cys123-Cys129, Cys148-Cys194, and Cys156-Cys350. A Cell attachment site motif is present at residues Arg126–Asp128. The phosphodiesterase domain stretch occupies residues Val144–Pro501. Residues Asp171 and Thr209 each coordinate Zn(2+). Thr209 (nucleophile) is an active-site residue. Residues Thr209, Asn230, and Asp311 each contribute to the 1-(9Z-octadecenoyl)-sn-glycero-3-phosphate site. 3 residues coordinate 1-hexadecanoyl-sn-glycero-3-phosphate: Thr209, Asn230, and Asp311. 3 residues coordinate 1-tetradecanoyl-sn-glycerol 3-phosphate: Thr209, Asn230, and Asp311. Residues Asp311, His315, Asp358, and His359 each contribute to the Zn(2+) site. Disulfide bonds link Cys366–Cys468, Cys413–Cys805, Cys566–Cys666, Cys568–Cys651, and Cys774–Cys784. Residue Asn410 is glycosylated (N-linked (GlcNAc...) asparagine). His474 provides a ligand contact to Zn(2+). His474 contacts 1-(9Z-octadecenoyl)-sn-glycero-3-phosphate. His474 lines the 1-hexadecanoyl-sn-glycero-3-phosphate pocket. His474 is a 1-tetradecanoyl-sn-glycerol 3-phosphate binding site. N-linked (GlcNAc...) asparagine glycosylation is present at Asn524. A nuclease-like domain region spans residues Leu597–Ile862. Ca(2+) contacts are provided by Asp739, Asn741, Asn743, Leu745, and Asp747. The N-linked (GlcNAc...) asparagine glycan is linked to Asn806. Residues Ile829–Thr850 form a required for secretion region.

Belongs to the nucleotide pyrophosphatase/phosphodiesterase family. The cofactor is Zn(2+). It depends on Ca(2+) as a cofactor. N-glycosylation, but not furin-cleavage, plays a critical role on secretion and on lysoPLD activity. Secretion requires simultaneous glycosylation on Asn-53 and Asn-410, while probable glycosylation of Asn-410 has a preferential role on lysoPLD activity. Not O-glycosylated. Post-translationally, the interdomain disulfide bond between Cys-413 and Cys-805 is essential for catalytic activity. Expressed in brain and adipose tissue.

It is found in the secreted. The enzyme catalyses a 1-O-alkyl-sn-glycero-3-phosphoethanolamine + H2O = a 1-O-alkyl-sn-glycero-3-phosphate + ethanolamine + H(+). It carries out the reaction a 1-acyl-sn-glycero-3-phosphoethanolamine + H2O = a 1-acyl-sn-glycero-3-phosphate + ethanolamine + H(+). It catalyses the reaction 1-(9Z-octadecenoyl)-sn-glycero-3-phosphoethanolamine + H2O = 1-(9Z-octadecenoyl)-sn-glycero-3-phosphate + ethanolamine + H(+). The catalysed reaction is a 1-O-alkyl-sn-glycero-3-phosphocholine + H2O = a 1-O-alkyl-sn-glycero-3-phosphate + choline + H(+). The enzyme catalyses 1-O-(9Z-octadecenyl)-sn-glycero-3-phosphocholine + H2O = 1-O-(9Z-octadecenyl)-sn-glycero-3-phosphate + choline + H(+). It carries out the reaction 1-O-hexadecyl-sn-glycero-3-phosphocholine + H2O = 1-O-hexadecyl-sn-glycero-3-phosphate + choline + H(+). It catalyses the reaction a 1-O-(1Z-alkenyl)-sn-glycero-3-phosphocholine + H2O = a 1-O-(1Z-alkenyl)-sn-glycero-3-phosphate + choline + H(+). The catalysed reaction is a 1-acyl-sn-glycero-3-phosphocholine + H2O = a 1-acyl-sn-glycero-3-phosphate + choline + H(+). The enzyme catalyses 1-dodecanoyl-sn-glycero-3-phosphocholine + H2O = 1-dodecanoyl-sn-glycerol 3-phosphate + choline + H(+). It carries out the reaction 1-(9Z-octadecenoyl)-sn-glycero-3-phosphocholine + H2O = 1-(9Z-octadecenoyl)-sn-glycero-3-phosphate + choline + H(+). It catalyses the reaction 1-tetradecanoyl-sn-glycero-3-phosphocholine + H2O = 1-tetradecanoyl-sn-glycerol 3-phosphate + choline + H(+). The catalysed reaction is 1-decanoyl-sn-glycero-3-phosphocholine + H2O = 1-decanoyl-sn-glycero-3-phosphate + choline + H(+). The enzyme catalyses 1-octadecanoyl-sn-glycero-3-phosphocholine + H2O = 1-octadecanoyl-sn-glycero-3-phosphate + choline + H(+). It carries out the reaction 1-hexadecanoyl-sn-glycero-3-phosphocholine + H2O = 1-hexadecanoyl-sn-glycero-3-phosphate + choline + H(+). It catalyses the reaction 1-hexanoyl-sn-glycero-3-phosphocholine + H2O = 1-hexanoyl-sn-glycero-3-phosphate + choline + H(+). The catalysed reaction is 1-(9Z,12Z)-octadecadienoyl-sn-glycero-3-phosphocholine + H2O = 1-(9Z,12Z)-octadecadienoyl-sn-glycero-3-phosphate + choline + H(+). The enzyme catalyses sphing-4-enine-phosphocholine + H2O = sphing-4-enine 1-phosphate + choline + H(+). It carries out the reaction 1-(5Z,8Z,11Z,14Z-eicosatetraenoyl)-sn-glycero-3-phosphocholine + H2O = 1-(5Z,8Z,11Z,14Z-eicosatetraenoyl)-sn-glycero-3-phosphate + choline + H(+). It catalyses the reaction a 2-acyl-sn-glycero-3-phosphocholine + H2O = a 2-acyl-sn-glycerol 3-phosphate + choline + H(+). The catalysed reaction is a 1,2-diacyl-sn-glycero-3-phosphocholine + H2O = a 1,2-diacyl-sn-glycero-3-phosphate + choline + H(+). The enzyme catalyses 1,2-dioctanoyl-sn-glycero-3-phosphocholine + H2O = 1,2-dioctanoyl-sn-glycero-3-phosphate + choline + H(+). It carries out the reaction 1,2-didecanoyl-sn-glycero-3-phosphocholine + H2O = 1,2-didecanoyl-sn-glycero-3-phosphate + choline + H(+). It catalyses the reaction a 1-acyl-sn-glycero-3-phospho-L-serine + H2O = a 1-acyl-sn-glycero-3-phosphate + L-serine + H(+). The catalysed reaction is 1-(9Z-octadecenoyl)-sn-glycero-3-phospho-L-serine + H2O = 1-(9Z-octadecenoyl)-sn-glycero-3-phosphate + L-serine + H(+). The enzyme catalyses a 2-acyl-sn-glycero-3-phospho-L-serine + H2O = a 2-acyl-sn-glycerol 3-phosphate + L-serine + H(+). Inhibited by EDTA and EGTA. Secreted lysophospholipase D that hydrolyzes lysophospholipids to produce the signaling molecule lysophosphatidic acid (LPA) in extracellular fluids. Its major substrate is lysophosphatidylcholine. Can also act on sphingosylphosphorylcholine producing sphingosine-1-phosphate, a modulator of cell motility. Can hydrolyze, in vitro, bis-pNPP, to some extent pNP-TMP, and barely ATP. Involved in several motility-related processes such as angiogenesis and neurite outgrowth. Acts as an angiogenic factor by stimulating migration of smooth muscle cells and microtubule formation. Stimulates migration of melanoma cells, probably via a pertussis toxin-sensitive G protein. May have a role in induction of parturition. Possible involvement in cell proliferation and adipose tissue development. Required for LPA production in activated platelets, cleaves the sn-1 lysophospholipids to generate sn-1 lysophosphatidic acids containing predominantly 18:2 and 20:4 fatty acids. Shows a preference for the sn-1 to the sn-2 isomer of 1-O-alkyl-sn-glycero-3-phosphocholine (lyso-PAF). The polypeptide is Autotaxin (Mus musculus (Mouse)).